The chain runs to 316 residues: MLQKIILATVVAFVLSLASGPLFIPYLRKLKFGQKVREDGPKSHIKKSGTPTMGGIMFITATVISTLIFSHWNKYLAILLLGFLGYGLIGFADDFLKVYFKRPLGLKAREKLIGQFLLAIIISYFAQEYVGTEVIFPFLKTTIDLGNFYIPFIVFVIVGTVNSVNLTDGLDGLAAGVSFIVMAFFTMTALFLNNITYGAFSAALTGGLLGFLRYNRHPAEIFMGDTGSLAIGGAIATAAVLTKLPLILPLIGIIYVAEAFSVIIQVLSFKLFGKRVFKMSPLHHHFELSGWQEQNVVYAFWIVTLIAMFLSFYSLS.

10 helical membrane-spanning segments follow: residues 5–25, 49–69, 76–96, 116–136, 141–161, 172–192, 195–212, 221–241, 244–264, and 296–316; these read IILATVVAFVLSLASGPLFIP, GTPTMGGIMFITATVISTLIF, LAILLLGFLGYGLIGFADDFL, FLLAIIISYFAQEYVGTEVIF, TTIDLGNFYIPFIVFVIVGTV, GLAAGVSFIVMAFFTMTALFL, ITYGAFSAALTGGLLGFL, IFMGDTGSLAIGGAIATAAVL, LPLILPLIGIIYVAEAFSVII, and VVYAFWIVTLIAMFLSFYSLS.

It belongs to the glycosyltransferase 4 family. MraY subfamily. Mg(2+) serves as cofactor.

Its subcellular location is the cell membrane. It carries out the reaction UDP-N-acetyl-alpha-D-muramoyl-L-alanyl-gamma-D-glutamyl-meso-2,6-diaminopimeloyl-D-alanyl-D-alanine + di-trans,octa-cis-undecaprenyl phosphate = di-trans,octa-cis-undecaprenyl diphospho-N-acetyl-alpha-D-muramoyl-L-alanyl-D-glutamyl-meso-2,6-diaminopimeloyl-D-alanyl-D-alanine + UMP. It participates in cell wall biogenesis; peptidoglycan biosynthesis. Its function is as follows. Catalyzes the initial step of the lipid cycle reactions in the biosynthesis of the cell wall peptidoglycan: transfers peptidoglycan precursor phospho-MurNAc-pentapeptide from UDP-MurNAc-pentapeptide onto the lipid carrier undecaprenyl phosphate, yielding undecaprenyl-pyrophosphoryl-MurNAc-pentapeptide, known as lipid I. This chain is Phospho-N-acetylmuramoyl-pentapeptide-transferase, found in Thermoanaerobacter pseudethanolicus (strain ATCC 33223 / 39E) (Clostridium thermohydrosulfuricum).